The following is a 185-amino-acid chain: Ribosome-recycling factor (185 aa).

It belongs to the RRF family.

It is found in the cytoplasm. Functionally, responsible for the release of ribosomes from messenger RNA at the termination of protein biosynthesis. May increase the efficiency of translation by recycling ribosomes from one round of translation to another. The sequence is that of Ribosome-recycling factor from Geobacillus thermodenitrificans (strain NG80-2).